We begin with the raw amino-acid sequence, 84 residues long: Omega-conotoxin-like ArMKLT1-02 (84 aa).

The signal sequence occupies residues 1–22 (MKVTCMMIVAVLFLTAWTFVTA). Positions 23–51 (DDSISALEDLFAKAHDKMENSEASPLNER) are excised as a propeptide. 3 disulfide bridges follow: cysteine 53-cysteine 71, cysteine 60-cysteine 75, and cysteine 70-cysteine 79.

It belongs to the conotoxin O1 superfamily. Expressed by the venom duct.

The protein resides in the secreted. Functionally, omega-conotoxins act at presynaptic membranes, they bind and block voltage-gated calcium channels (Cav). The chain is Omega-conotoxin-like ArMKLT1-02 from Conus arenatus (Sand-dusted cone).